The following is a 387-amino-acid chain: Lymphocyte transmembrane adapter 1 (387 aa).

Residues 1–37 (MDVTTSAWSETTRRISEPSTLQGTLGSLDKAEDHSSS) lie on the Extracellular side of the membrane. The helical; Signal-anchor for type III membrane protein transmembrane segment at 38 to 58 (IFSGFAALLAILLVVAVICVL) threads the bilayer. Residues 59-387 (WCCGKRKKRQ…VCAAEAGARG (329 aa)) are Cytoplasmic-facing. A disordered region spans residues 114–136 (VSTESLLSRNSDSPSSEHVPSRA). Over residues 118-129 (SLLSRNSDSPSS) the composition is skewed to low complexity. At tyrosine 195 the chain carries Phosphotyrosine. The interval 230-268 (SEEIDEGCGNASDCTSLGSPGTENSDPLSDGEGSSQTSN) is disordered. The segment covering 241–268 (SDCTSLGSPGTENSDPLSDGEGSSQTSN) has biased composition (polar residues). Phosphotyrosine occurs at positions 270 and 296. The disordered stretch occupies residues 294–387 (RDYENVPPGP…VCAAEAGARG (94 aa)). Basic and acidic residues predominate over residues 319 to 329 (DHVEGRTDGPE). The span at 360–369 (PWEDAEETSS) shows a compositional bias: acidic residues. Tyrosine 375 is modified (phosphotyrosine).

In terms of assembly, when phosphorylated, interacts with GRB2, PIK3R1 and GRAP2. Phosphorylated on tyrosines upon TCR or BCR activation; which leads to the recruitment of GRB2, PIK3R1 and GRAP2.

The protein localises to the cell membrane. Its function is as follows. Negatively regulates TCR (T-cell antigen receptor)-mediated signaling in T-cells and BCR (B-cell antigen receptor)-mediated signaling in B-cells. The chain is Lymphocyte transmembrane adapter 1 (LAX1) from Bos taurus (Bovine).